The primary structure comprises 163 residues: Epithelial membrane protein 3 (163 aa).

A helical membrane pass occupies residues 4–24 (LLLVVSALHILILVLLFVATL). N-linked (GlcNAc...) asparagine glycans are attached at residues Asn-46 and Asn-56. Helical transmembrane passes span 66–86 (VQALMVLSLILCCLSFILFMI), 100–120 (TGLCQLCTSAAVFSGALIYAI), and 139–159 (FALAWVAFPLALVSGIIYIHL).

This sequence belongs to the PMP-22/EMP/MP20 family.

It is found in the membrane. Functionally, probably involved in cell proliferation and cell-cell interactions. This chain is Epithelial membrane protein 3 (Emp3), found in Rattus norvegicus (Rat).